Reading from the N-terminus, the 162-residue chain is Protein archease (162 aa).

Positions 34, 161, and 162 each coordinate Ca(2+).

The protein belongs to the archease family. As to quaternary structure, component of the tRNA-splicing ligase complex.

In terms of biological role, component of the tRNA-splicing ligase complex required to facilitate the enzymatic turnover of catalytic subunit RTCB. Together with ddx1, acts by facilitating the guanylylation of RTCB, a key intermediate step in tRNA ligation. The chain is Protein archease (zbtb8os) from Danio rerio (Zebrafish).